The following is a 156-amino-acid chain: Cyanate hydratase (156 aa).

Residues arginine 96, glutamate 99, and serine 122 contribute to the active site.

This sequence belongs to the cyanase family.

The enzyme catalyses cyanate + hydrogencarbonate + 3 H(+) = NH4(+) + 2 CO2. Catalyzes the reaction of cyanate with bicarbonate to produce ammonia and carbon dioxide. The chain is Cyanate hydratase from Burkholderia mallei (strain NCTC 10247).